Consider the following 184-residue polypeptide: Putative DNA-directed RNA polymerase subunit 454R (184 aa).

It belongs to the archaeal Rpo5/eukaryotic RPB5 RNA polymerase subunit family.

Its function is as follows. Component of the DNA-dependent RNA polymerase that catalyzes the transcription in the cytoplasm of viral DNA into RNA using the four ribonucleoside triphosphates as substrates. The sequence is that of Putative DNA-directed RNA polymerase subunit 454R from Invertebrate iridescent virus 6 (IIV-6).